Reading from the N-terminus, the 273-residue chain is Lactose transport system permease protein LacG (273 aa).

A run of 6 helical transmembrane segments spans residues 15-35 (YSVLSLAAFLSIFPFIWMVIG), 77-97 (IALVGTALTLLVSSLAGYGFE), 110-130 (VILLTLMVPFAALMIPLFMLM), 134-154 (GLLNTHIAIMLPMIASAFIIF), 182-204 (FFYIYVPVMRSTYAAAFVIVFML), and 240-260 (GTVMIGTILATLPTLLVFFAM). One can recognise an ABC transmembrane type-1 domain in the interval 71–260 (FWNSVKIALV…LPTLLVFFAM (190 aa)).

Belongs to the binding-protein-dependent transport system permease family. MalFG subfamily.

The protein localises to the cell inner membrane. Its function is as follows. Part of the binding-protein-dependent transport system for lactose. Probably responsible for the translocation of the substrate across the membrane. This Rhizobium radiobacter (Agrobacterium tumefaciens) protein is Lactose transport system permease protein LacG (lacG).